We begin with the raw amino-acid sequence, 226 residues long: 7-cyano-7-deazaguanine synthase (226 aa).

9 to 19 is a binding site for ATP; sequence YSGGLDSTTCL. Positions 189, 199, 202, and 205 each coordinate Zn(2+).

It belongs to the QueC family. Requires Zn(2+) as cofactor.

The enzyme catalyses 7-carboxy-7-deazaguanine + NH4(+) + ATP = 7-cyano-7-deazaguanine + ADP + phosphate + H2O + H(+). It participates in purine metabolism; 7-cyano-7-deazaguanine biosynthesis. Functionally, catalyzes the ATP-dependent conversion of 7-carboxy-7-deazaguanine (CDG) to 7-cyano-7-deazaguanine (preQ(0)). The protein is 7-cyano-7-deazaguanine synthase of Pelobacter propionicus (strain DSM 2379 / NBRC 103807 / OttBd1).